Here is a 361-residue protein sequence, read N- to C-terminus: Deoxyhypusine hydroxylase (361 aa).

HEAT-like PBS-type repeat units lie at residues 59–85 (LKHE…VLEN), 94–120 (VRHE…YMQD), 183–211 (QRYR…GFRD), and 216–242 (FRHE…RLRD). Positions 61, 62, 96, and 97 each coordinate Fe cation. The Fe cation site is built by H218, E219, H251, and E252.

The protein belongs to the deoxyhypusine hydroxylase family. The cofactor is Fe(2+).

It localises to the cytoplasm. Its subcellular location is the nucleus. The catalysed reaction is [eIF5A protein]-deoxyhypusine + AH2 + O2 = [eIF5A protein]-hypusine + A + H2O. The protein operates within protein modification; eIF5A hypusination. Catalyzes the hydroxylation of the N(6)-(4-aminobutyl)-L-lysine intermediate to form hypusine, an essential post-translational modification only found in mature eIF-5A factor. In Cryptococcus neoformans var. neoformans serotype D (strain B-3501A) (Filobasidiella neoformans), this protein is Deoxyhypusine hydroxylase.